Reading from the N-terminus, the 503-residue chain is Protein phosphatase eya-1 (503 aa).

D237 serves as the catalytic Nucleophile. The Mg(2+) site is built by D237 and D239. D239 functions as the Proton donor in the catalytic mechanism.

It belongs to the HAD-like hydrolase superfamily. EYA family. As to quaternary structure, interacts (via C-terminus) with ceh-34 (via N-terminus). It depends on Mg(2+) as a cofactor. Expressed in body wall muscles. Expressed in BAG sensory neurons and in other head neurons.

It is found in the nucleus. It carries out the reaction O-phospho-L-tyrosyl-[protein] + H2O = L-tyrosyl-[protein] + phosphate. Its function is as follows. Tyrosine protein phosphatase. Acts probably as a transcription regulator in the embryonic and postembryonic development of several tissues including pharynx, vulva and gonads. Required for the development of anterior tissues during late embryogenesis. Together with ceh-34, required to specify the coelomocyte fate in embryonic and postembryonic precursors. In the anterior part of the embryo, prevents apoptosis in cells that are not fated to die. Together with ceh-34 activates proapoptotic factor egl-1 expression to promote motor neuron M4 sister cell apoptosis. Also promotes apoptosis of I1 pharyngeal neuron sister cell. Plays a role in locomotion and fertility. May play a role in resistance to heat and oxidative stresses. May cooperate with the transcription factors vab-3 and ceh-32 to repress transcription factor ets-5 expression in non BAG neuronal cells. The polypeptide is Protein phosphatase eya-1 (Caenorhabditis elegans).